We begin with the raw amino-acid sequence, 102 residues long: Small ribosomal subunit protein uS10 (102 aa).

Belongs to the universal ribosomal protein uS10 family. As to quaternary structure, part of the 30S ribosomal subunit.

Involved in the binding of tRNA to the ribosomes. This Kosmotoga olearia (strain ATCC BAA-1733 / DSM 21960 / TBF 19.5.1) protein is Small ribosomal subunit protein uS10.